The following is a 503-amino-acid chain: Mitogen-activated protein kinase kinae mkk2 (503 aa).

Residues 1 to 130 (MSSSPVPLLR…ASGPASASSS (130 aa)) are disordered. The span at 53–66 (APQPQRPSTRPAPP) shows a compositional bias: pro residues. A compositionally biased stretch (polar residues) spans 100 to 115 (TGLNESTGHSRSSSFT). Low complexity predominate over residues 121–130 (ASGPASASSS). The Protein kinase domain maps to 211–481 (IIELGSLGEG…PWRMLEHPWM (271 aa)). ATP contacts are provided by residues 217-225 (LGEGAGGAV) and Lys-240. Asp-338 functions as the Proton acceptor in the catalytic mechanism.

The protein belongs to the protein kinase superfamily. STE Ser/Thr protein kinase family. MAP kinase kinase subfamily.

The enzyme catalyses L-seryl-[protein] + ATP = O-phospho-L-seryl-[protein] + ADP + H(+). It carries out the reaction L-threonyl-[protein] + ATP = O-phospho-L-threonyl-[protein] + ADP + H(+). Mitogen-activated kinase kinase (MAPKK), part of the cell wall integrity (CWI) signaling pathway composed by three protein kinases bck1, mkk2 and mpkA and responsible for the maintaining of cell-wall integrity balance. The CWI pathway also regulates the oxidative stress response, as well as the production of some secondary metabolites including pyomelanin. The sequence is that of Mitogen-activated protein kinase kinae mkk2 from Aspergillus fumigatus (strain CBS 144.89 / FGSC A1163 / CEA10) (Neosartorya fumigata).